The primary structure comprises 449 residues: MEKMRGHVLAVPFPSQGHITPIRQFCKRLHSKGFKTTHTLTTFIFNTIHLDPSSPISIATISDGYDQGGFSSAGSVPEYLQNFKTFGSKTVADIIRKHQSTDNPITCIVYDSFMPWALDLAMDFGLAAAPFFTQSCAVNYINYLSYINNGSLTLPIKDLPLLELQDLPTFVTPTGSHLAYFEMVLQQFTNFDKADFVLVNSFHDLDLHEEELLSKVCPVLTIGPTVPSMYLDQQIKSDNDYDLNLFDLKEAALCTDWLDKRPEGSVVYIAFGSMAKLSSEQMEEIASAISNFSYLWVVRASEESKLPPGFLETVDKDKSLVLKWSPQLQVLSNKAIGCFMTHCGWNSTMEGLSLGVPMVAMPQWTDQPMNAKYIQDVWKVGVRVKAEKESGICKREEIEFSIKEVMEGEKSKEMKENAGKWRDLAVKSLSEGGSTDININEFVSKIQIK.

The Proton acceptor role is filled by His-18. An an anthocyanidin-binding site is contributed by His-18. Asp-111 acts as the Charge relay in catalysis. Residues Thr-133, Gln-327, His-342, Trp-345, Asn-346, Ser-347, Glu-350, Asp-366, and Gln-367 each coordinate UDP-alpha-D-glucose.

The protein belongs to the UDP-glycosyltransferase family.

The enzyme catalyses a 7-O-hydroxy-flavonol + UDP-alpha-D-glucose = a flavonol 7-O-beta-D-glucoside + UDP + H(+). Functionally, possesses quercetin 7-O-glucosyltransferase and 4'-O-glucosyltransferase activities in vitro. Also active in vitro on benzoates and benzoate derivatives. Has low affinity for the tryptophan precursor anthranilate. Catalyzes the formation of anthranilate glucose ester. Is a minor source of this activity in the plant. The protein is Flavonol 7-O-beta-glucosyltransferase UGT74F1 of Arabidopsis thaliana (Mouse-ear cress).